Consider the following 920-residue polypeptide: Ubiquitin ligase-binding protein BUL2 (920 aa).

Polar residues predominate over residues 1–10 (MTFTFSTSSR). Residues 1–89 (MTFTFSTSSR…EENSLEMDCT (89 aa)) are disordered. A Phosphothreonine modification is found at Thr-22. Over residues 35–57 (QQLSSNSTDNSLHPNSGQTPRAS) the composition is skewed to polar residues. The segment covering 73–82 (DRLRQEREEN) has biased composition (basic and acidic residues). Residues 129–133 (FPPSY) carry the PY-motif motif. The residue at position 557 (Ser-557) is a Phosphoserine.

This sequence belongs to the BUL1 family. Component of the RSP5-BUL1/2 ubiquitin ligase complex composed of at least RSP5 and BUL1 or BUL2.

It is found in the cytoplasm. It participates in protein modification; protein ubiquitination. In terms of biological role, component of a RSP5 ubiquitin ligase complex which specifies polyubiquitination and intracellular trafficking of the general amino acid permease GAP1 as well as other permeases such as PMA1. The RSP5-BUL1/2 complex is also necessary for the heat-shock element (HSE)-mediated gene expression, nitrogen starvation GLN3-dependent transcription and pressure-induced differential regulation of the 2 tryptophan permeases TAT1 and TAT2. This Saccharomyces cerevisiae (strain ATCC 204508 / S288c) (Baker's yeast) protein is Ubiquitin ligase-binding protein BUL2 (BUL2).